Reading from the N-terminus, the 325-residue chain is Chain length determinant protein (325 aa).

Topologically, residues 1–31 are cytoplasmic; the sequence is MRVENNNVSGQNLDPEQIDLIDLLVQLWRGK. A helical transmembrane segment spans residues 32–52; sequence MTIIISVIVAIVLAIGYLVVA. Residues 53–294 lie on the Periplasmic side of the membrane; it reads KEKWTSTAIV…LPIRRDSPKK (242 aa). A helical membrane pass occupies residues 295–315; the sequence is AITLILAVLLGGMVGAGIVLG. Over 316–325 the chain is Cytoplasmic; it reads RNALRNYNAK.

It belongs to the WzzB/Cld/Rol family.

The protein resides in the cell inner membrane. It participates in bacterial outer membrane biogenesis; lipopolysaccharide biosynthesis. Confers a modal distribution of chain length on the O-antigen component of lipopolysaccharide (LPS). Gives rise to a reduced number of short chain molecules and increases in numbers of longer molecules, with a modal value of 13 (in strain O111/M92) and of 17 (in strain K12). This Escherichia coli protein is Chain length determinant protein (wzzB).